Consider the following 359-residue polypeptide: tRNA-specific 2-thiouridylase MnmA (359 aa).

Residues 6–13 (AMSGGVDS) and Leu-32 each bind ATP. Residue Cys-97 is the Nucleophile of the active site. Cys-97 and Cys-195 form a disulfide bridge. Gly-121 provides a ligand contact to ATP. An interaction with tRNA region spans residues 144 to 146 (KDQ). The active-site Cysteine persulfide intermediate is the Cys-195.

This sequence belongs to the MnmA/TRMU family.

The protein localises to the cytoplasm. It catalyses the reaction S-sulfanyl-L-cysteinyl-[protein] + uridine(34) in tRNA + AH2 + ATP = 2-thiouridine(34) in tRNA + L-cysteinyl-[protein] + A + AMP + diphosphate + H(+). Catalyzes the 2-thiolation of uridine at the wobble position (U34) of tRNA, leading to the formation of s(2)U34. The polypeptide is tRNA-specific 2-thiouridylase MnmA (Tropheryma whipplei (strain Twist) (Whipple's bacillus)).